We begin with the raw amino-acid sequence, 184 residues long: Oligoribonuclease (184 aa).

The Exonuclease domain maps to 8 to 171 (LIWIDLEMTG…EDIRESVVEL (164 aa)). Y129 is an active-site residue.

This sequence belongs to the oligoribonuclease family.

The protein localises to the cytoplasm. 3'-to-5' exoribonuclease specific for small oligoribonucleotides. This Buchnera aphidicola subsp. Acyrthosiphon pisum (strain APS) (Acyrthosiphon pisum symbiotic bacterium) protein is Oligoribonuclease.